The chain runs to 767 residues: Photosystem I P700 chlorophyll a apoprotein A1 (767 aa).

8 helical membrane passes run 72-95, 158-181, 197-221, 305-323, 364-387, 403-429, 451-473, and 548-566; these read IFSA…FHGA, LMAL…FHYH, LNHH…HVSA, IAHH…GHMY, WHAQ…QHMY, IGLF…IAMV, AIIS…LYIH, and FMVH…LILL. [4Fe-4S] cluster-binding residues include cysteine 590 and cysteine 599. 2 consecutive transmembrane segments (helical) span residues 606–627 and 681–703; these read HVFL…HFSW and TSAY…MFLF. A chlorophyll a'-binding site is contributed by histidine 692. Chlorophyll a is bound by residues methionine 700 and tyrosine 708. Tryptophan 709 is a phylloquinone binding site. A helical membrane pass occupies residues 741 to 761; the sequence is AVGVAHYLLGGIATTWAFFHA.

It belongs to the PsaA/PsaB family. As to quaternary structure, the PsaA/B heterodimer binds the P700 chlorophyll special pair and subsequent electron acceptors. PSI consists of a core antenna complex that captures photons, and an electron transfer chain that converts photonic excitation into a charge separation. The cyanobacterial PSI reaction center is composed of one copy each of PsaA,B,C,D,E,F,I,J,K,L,M and X, and forms trimeric complexes. PSI electron transfer chain: 5 chlorophyll a, 1 chlorophyll a', 2 phylloquinones and 3 4Fe-4S clusters. PSI core antenna: 90 chlorophyll a, 22 carotenoids, 3 phospholipids and 1 galactolipid. P700 is a chlorophyll a/chlorophyll a' dimer, A0 is one or more chlorophyll a, A1 is one or both phylloquinones and FX is a shared 4Fe-4S iron-sulfur center. serves as cofactor.

Its subcellular location is the cellular thylakoid membrane. It catalyses the reaction reduced [plastocyanin] + hnu + oxidized [2Fe-2S]-[ferredoxin] = oxidized [plastocyanin] + reduced [2Fe-2S]-[ferredoxin]. Its function is as follows. PsaA and PsaB bind P700, the primary electron donor of photosystem I (PSI), as well as the electron acceptors A0, A1 and FX. PSI is a plastocyanin/cytochrome c6-ferredoxin oxidoreductase, converting photonic excitation into a charge separation, which transfers an electron from the donor P700 chlorophyll pair to the spectroscopically characterized acceptors A0, A1, FX, FA and FB in turn. Oxidized P700 is reduced on the lumenal side of the thylakoid membrane by plastocyanin or cytochrome c6. The sequence is that of Photosystem I P700 chlorophyll a apoprotein A1 from Parasynechococcus marenigrum (strain WH8102).